Consider the following 508-residue polypeptide: Glycerol kinase (508 aa).

Thr-15 contributes to the ADP binding site. ATP-binding residues include Thr-15, Ser-16, and Ser-17. Thr-15 is a binding site for sn-glycerol 3-phosphate. An ADP-binding site is contributed by Arg-19. Sn-glycerol 3-phosphate-binding residues include Arg-85, Glu-86, Tyr-138, and Asp-251. Residues Arg-85, Glu-86, Tyr-138, Asp-251, and Gln-252 each contribute to the glycerol site. The ADP site is built by Thr-273, Gly-317, and Gly-419. ATP-binding residues include Thr-273, Gly-317, and Gly-419.

The protein belongs to the FGGY kinase family.

It carries out the reaction glycerol + ATP = sn-glycerol 3-phosphate + ADP + H(+). The protein operates within polyol metabolism; glycerol degradation via glycerol kinase pathway; sn-glycerol 3-phosphate from glycerol: step 1/1. Its activity is regulated as follows. Inhibited by fructose 1,6-bisphosphate (FBP). Key enzyme in the regulation of glycerol uptake and metabolism. Catalyzes the phosphorylation of glycerol to yield sn-glycerol 3-phosphate. The chain is Glycerol kinase from Mycoplasma pneumoniae (strain ATCC 29342 / M129 / Subtype 1) (Mycoplasmoides pneumoniae).